A 513-amino-acid polypeptide reads, in one-letter code: Zinc finger CCCH-type with G patch domain-containing protein (513 aa).

A C3H1-type zinc finger spans residues 155-178; that stretch reads PCSYYLEGECRFDEAKCRFSHGAL. 2 stretches are compositionally biased toward acidic residues: residues 252–261 and 273–283; these read DQDEDDELSS and SDEAESDMDDL. Residues 252-283 are disordered; it reads DQDEDDELSSEESTSSMRDASSDEAESDMDDL. A G-patch domain is found at 312 to 358; it reads TRGIGSKLMEKMGYIHGTGLGSEGRGIVTPVSAQILPQGRSLDACME. 2 disordered regions span residues 411–430 and 477–513; these read PGESTQQSEQVAKKAKNNEL and QVQMQSHKQELATLQAQERSLSKEQQTRKSKNKMFEF. Residues 477 to 495 show a composition bias toward polar residues; that stretch reads QVQMQSHKQELATLQAQER. The span at 496–513 shows a compositional bias: basic and acidic residues; sequence SLSKEQQTRKSKNKMFEF.

The protein localises to the nucleus. Transcription repressor. This chain is Zinc finger CCCH-type with G patch domain-containing protein, found in Drosophila sechellia (Fruit fly).